The sequence spans 80 residues: Waprin-Phi3 (80 aa).

An N-terminal signal peptide occupies residues 1-22 (MKPWILLLLAGLLILSTQLTTA). Positions 31 to 78 (PKVKPGECPKVKIPPDYPCNQYCVWDFDCEGNKKCCPVGCAKECFPPG) constitute a WAP domain. Disulfide bonds link Cys-38–Cys-66, Cys-49–Cys-70, Cys-53–Cys-65, and Cys-59–Cys-74.

It belongs to the venom waprin family. Expressed by the venom gland.

Its subcellular location is the secreted. In terms of biological role, damages membranes of susceptible bacteria. Has no hemolytic activity. Not toxic to mice. Does not inhibit the proteinases elastase and cathepsin G. The sequence is that of Waprin-Phi3 from Philodryas olfersii (Green snake).